A 305-amino-acid polypeptide reads, in one-letter code: UDP-3-O-acyl-N-acetylglucosamine deacetylase (305 aa).

Zn(2+) contacts are provided by histidine 78, histidine 237, and aspartate 241. Histidine 264 functions as the Proton donor in the catalytic mechanism.

The protein belongs to the LpxC family. Requires Zn(2+) as cofactor.

It catalyses the reaction a UDP-3-O-[(3R)-3-hydroxyacyl]-N-acetyl-alpha-D-glucosamine + H2O = a UDP-3-O-[(3R)-3-hydroxyacyl]-alpha-D-glucosamine + acetate. Its pathway is glycolipid biosynthesis; lipid IV(A) biosynthesis; lipid IV(A) from (3R)-3-hydroxytetradecanoyl-[acyl-carrier-protein] and UDP-N-acetyl-alpha-D-glucosamine: step 2/6. Catalyzes the hydrolysis of UDP-3-O-myristoyl-N-acetylglucosamine to form UDP-3-O-myristoylglucosamine and acetate, the committed step in lipid A biosynthesis. The protein is UDP-3-O-acyl-N-acetylglucosamine deacetylase of Burkholderia thailandensis (strain ATCC 700388 / DSM 13276 / CCUG 48851 / CIP 106301 / E264).